The sequence spans 484 residues: Glutamyl-tRNA(Gln) amidotransferase subunit A (484 aa).

Catalysis depends on charge relay system residues Lys-77 and Ser-152. Ser-176 functions as the Acyl-ester intermediate in the catalytic mechanism.

Belongs to the amidase family. GatA subfamily. Heterotrimer of A, B and C subunits.

It catalyses the reaction L-glutamyl-tRNA(Gln) + L-glutamine + ATP + H2O = L-glutaminyl-tRNA(Gln) + L-glutamate + ADP + phosphate + H(+). Allows the formation of correctly charged Gln-tRNA(Gln) through the transamidation of misacylated Glu-tRNA(Gln) in organisms which lack glutaminyl-tRNA synthetase. The reaction takes place in the presence of glutamine and ATP through an activated gamma-phospho-Glu-tRNA(Gln). This is Glutamyl-tRNA(Gln) amidotransferase subunit A from Pseudomonas aeruginosa (strain ATCC 15692 / DSM 22644 / CIP 104116 / JCM 14847 / LMG 12228 / 1C / PRS 101 / PAO1).